The chain runs to 260 residues: Adenosylcobinamide-GDP ribazoletransferase (260 aa).

6 helical membrane-spanning segments follow: residues 40–60, 64–84, 117–137, 192–212, 214–234, and 240–260; these read AFPLAGAVLGLLAGAVLFMAY, LPPLACAMLAIGALAAMTGAL, FAALTLIVFVGLKAALLMTII, GIGLAFLVFTLIPAGGFLSLI, ALVLATGLLFGFARLCIAKIG, and TLGAAQQIGSVAVLAGLVMAL.

The protein belongs to the CobS family. Mg(2+) serves as cofactor.

The protein resides in the cell inner membrane. The catalysed reaction is alpha-ribazole + adenosylcob(III)inamide-GDP = adenosylcob(III)alamin + GMP + H(+). It carries out the reaction alpha-ribazole 5'-phosphate + adenosylcob(III)inamide-GDP = adenosylcob(III)alamin 5'-phosphate + GMP + H(+). It participates in cofactor biosynthesis; adenosylcobalamin biosynthesis; adenosylcobalamin from cob(II)yrinate a,c-diamide: step 7/7. Joins adenosylcobinamide-GDP and alpha-ribazole to generate adenosylcobalamin (Ado-cobalamin). Also synthesizes adenosylcobalamin 5'-phosphate from adenosylcobinamide-GDP and alpha-ribazole 5'-phosphate. This chain is Adenosylcobinamide-GDP ribazoletransferase, found in Brucella anthropi (strain ATCC 49188 / DSM 6882 / CCUG 24695 / JCM 21032 / LMG 3331 / NBRC 15819 / NCTC 12168 / Alc 37) (Ochrobactrum anthropi).